The sequence spans 407 residues: (R)-phenyllactyl-CoA dehydratase alpha subunit (407 aa).

The propeptide occupies M1–R4.

This sequence belongs to the FldB/FldC dehydratase alpha/beta subunit family. In terms of assembly, part of the heterotrimeric phenyllactate dehydratase complex FldABC, composed of (R)-phenyllactate CoA-transferase (FldA) and a heterodimeric (R)-phenyllactyl-CoA dehydratase (FldB and FldC). It depends on [4Fe-4S] cluster as a cofactor. No flavin could be detected in the FldABC complex, and the addition of FAD, FMN or riboflavin to the dehydratase do not increase enzymatic activity. is required as a cofactor.

The catalysed reaction is (R)-3-phenyllactoyl-CoA = (E)-cinnamoyl-CoA + H2O. It catalyses the reaction (R)-3-(4-hydroxyphenyl)lactoyl-CoA = (E)-4-coumaroyl-CoA + H2O. It carries out the reaction (R)-3-(indol-3-yl)lactoyl-CoA = (E)-3-(indol-3-yl)acryloyl-CoA + H2O. It functions in the pathway amino-acid degradation; L-phenylalanine degradation. Component of the phenyllactate dehydratase complex FldABC that is involved in the fermentation of L-phenylalanine via a Stickland reaction. This complex catalyzes the reversible syn-dehydration of (R)-phenyllactate to (E)-cinnamate in two steps, a CoA-transfer from cinnamoyl-CoA to phenyllactate, catalyzed by FldA, followed by the dehydration of phenyllactyl-CoA to cinnamoyl-CoA, catalyzed by FldB and FldC. Requires the activator FldI to initiate catalysis. This chain is (R)-phenyllactyl-CoA dehydratase alpha subunit, found in Clostridium sporogenes.